Here is a 609-residue protein sequence, read N- to C-terminus: Alpha-glucosides permease MPH2 (609 aa).

Over methionine 1–threonine 106 the chain is Cytoplasmic. A helical membrane pass occupies residues threonine 107–phenylalanine 127. At glutamine 128 to glutamate 142 the chain is on the extracellular side. A helical transmembrane segment spans residues isoleucine 143 to leucine 163. Residues glutamine 164–threonine 178 lie on the Cytoplasmic side of the membrane. The chain crosses the membrane as a helical span at residues leucine 179–leucine 199. Position 200 (glycine 200) is a topological domain, extracellular. A helical transmembrane segment spans residues methionine 201–valine 221. The Cytoplasmic segment spans residues serine 222–tyrosine 234. A helical membrane pass occupies residues tyrosine 235–methionine 255. Topologically, residues lysine 256–lysine 270 are extracellular. Residues leucine 271–proline 291 form a helical membrane-spanning segment. Residues glutamate 292–arginine 363 are Cytoplasmic-facing. A helical transmembrane segment spans residues isoleucine 364–threonine 384. At tyrosine 385–serine 397 the chain is on the extracellular side. Residues phenylalanine 398–alanine 418 traverse the membrane as a helical segment. Residues serine 419 to aspartate 426 are Cytoplasmic-facing. Residues leucine 427–cysteine 447 traverse the membrane as a helical segment. Topologically, residues serine 448–serine 459 are extracellular. The helical transmembrane segment at leucine 460–valine 480 threads the bilayer. The Cytoplasmic segment spans residues serine 481 to threonine 492. Residues isoleucine 493 to tyrosine 513 form a helical membrane-spanning segment. Topologically, residues glutamine 514–lysine 525 are extracellular. A helical transmembrane segment spans residues serine 526–proline 546. At glutamate 547–leucine 609 the chain is on the cytoplasmic side.

This sequence belongs to the major facilitator superfamily. Sugar transporter (TC 2.A.1.1) family.

The protein resides in the cell membrane. Functionally, high-affinity uptake of maltose and maltotriose. Also transports alpha-methylglucoside, glucose and turanose but not melezitose or trehalose. This is Alpha-glucosides permease MPH2 (MPH2) from Saccharomyces cerevisiae (strain ATCC 204508 / S288c) (Baker's yeast).